Reading from the N-terminus, the 185-residue chain is ATP synthase subunit b 2 (185 aa).

Residues 1-23 (MAEGHGDAKGATAHTAADGGHKA) form a disordered region. The segment covering 9–18 (KGATAHTAAD) has biased composition (low complexity). A helical transmembrane segment spans residues 32–51 (TFASQLVSLTIAFVALYLIV).

This sequence belongs to the ATPase B chain family. As to quaternary structure, F-type ATPases have 2 components, F(1) - the catalytic core - and F(0) - the membrane proton channel. F(1) has five subunits: alpha(3), beta(3), gamma(1), delta(1), epsilon(1). F(0) has three main subunits: a(1), b(2) and c(10-14). The alpha and beta chains form an alternating ring which encloses part of the gamma chain. F(1) is attached to F(0) by a central stalk formed by the gamma and epsilon chains, while a peripheral stalk is formed by the delta and b chains.

It is found in the cell inner membrane. Functionally, f(1)F(0) ATP synthase produces ATP from ADP in the presence of a proton or sodium gradient. F-type ATPases consist of two structural domains, F(1) containing the extramembraneous catalytic core and F(0) containing the membrane proton channel, linked together by a central stalk and a peripheral stalk. During catalysis, ATP synthesis in the catalytic domain of F(1) is coupled via a rotary mechanism of the central stalk subunits to proton translocation. Its function is as follows. Component of the F(0) channel, it forms part of the peripheral stalk, linking F(1) to F(0). The b'-subunit is a diverged and duplicated form of b found in plants and photosynthetic bacteria. The protein is ATP synthase subunit b 2 (atpF2) of Rhodopseudomonas palustris (strain HaA2).